The following is a 299-amino-acid chain: tRNA pseudouridine synthase B (299 aa).

The active-site Nucleophile is Asp-38.

Belongs to the pseudouridine synthase TruB family. Type 1 subfamily.

It carries out the reaction uridine(55) in tRNA = pseudouridine(55) in tRNA. Functionally, responsible for synthesis of pseudouridine from uracil-55 in the psi GC loop of transfer RNAs. This Alkaliphilus oremlandii (strain OhILAs) (Clostridium oremlandii (strain OhILAs)) protein is tRNA pseudouridine synthase B.